The following is a 213-amino-acid chain: uncharacterized protein (213 aa).

Over residues 1-11 (MFATKDPEFEN) the composition is skewed to basic and acidic residues. Disordered stretches follow at residues 1-21 (MFAT…SPRN) and 63-98 (LRNK…EQAW). Polar residues predominate over residues 12–21 (RINTNKSPRN). Basic and acidic residues predominate over residues 63–93 (LRNKAPKNEETKHEEHTPDNHEETDHHEAKQ).

This is an uncharacterized protein from Escherichia coli (strain K12).